Reading from the N-terminus, the 698-residue chain is Polyribonucleotide nucleotidyltransferase (698 aa).

Asp487 and Asp493 together coordinate Mg(2+). Positions Pro555–Ile614 constitute a KH domain. The region spanning Gly624–Lys692 is the S1 motif domain.

This sequence belongs to the polyribonucleotide nucleotidyltransferase family. Mg(2+) is required as a cofactor.

It localises to the cytoplasm. The enzyme catalyses RNA(n+1) + phosphate = RNA(n) + a ribonucleoside 5'-diphosphate. In terms of biological role, involved in mRNA degradation. Catalyzes the phosphorolysis of single-stranded polyribonucleotides processively in the 3'- to 5'-direction. The sequence is that of Polyribonucleotide nucleotidyltransferase from Lachnoclostridium phytofermentans (strain ATCC 700394 / DSM 18823 / ISDg) (Clostridium phytofermentans).